The primary structure comprises 113 residues: Beta-microseminoprotein (113 aa).

Positions 1-20 (MEAWLGSLLFLATMVIASKA) are cleaved as a signal peptide. 5 disulfides stabilise this stretch: Cys-22/Cys-69, Cys-38/Cys-61, Cys-56/Cys-92, Cys-59/Cys-68, and Cys-83/Cys-106.

The protein belongs to the beta-microseminoprotein family. In terms of assembly, homodimer; Interacts with PI16.

It is found in the secreted. The sequence is that of Beta-microseminoprotein (Msmb) from Mus musculus (Mouse).